A 321-amino-acid chain; its full sequence is MSGGKSAQGPEEGGVCITEALITKRNLTFPEDGELSEKMFHTLDELQTVRLDREGITTIRNLEGLQNLHSLYLQGNKIQQIENLACIPSLRFLSLAGNQIRQVENLLDLPCLQFLDLSENLIETLKLDEFPQSLLILNLSGNSCTNQDGYRELVTEALPLLLDLDGQPVVERWISDEEDEASSDEEFPELSGPFCSERGFLKELEQELSRHREHRQQTALTEHLLRMEMQPTLTDLPLLPGVPMAGDSSPSATPAQGEETVPEAVSSPQASSPTKKPCSLIPRGHQSSFWGRKGARAATAPKASVAEAPSTTKTTAKRSKK.

4 LRR repeats span residues 45-66, 67-88, 89-110, and 111-132; these read ELQTVRLDREGITTIRNLEGLQ, NLHSLYLQGNKIQQIENLACIP, SLRFLSLAGNQIRQVENLLDLP, and CLQFLDLSENLIETLKLDEFPQ. Positions 142–184 constitute an LRRCT domain; that stretch reads NSCTNQDGYRELVTEALPLLLDLDGQPVVERWISDEEDEASSD. Residues Ser175 and Ser182 each carry the phosphoserine modification. Positions 201–221 form a coiled coil; that stretch reads LKELEQELSRHREHRQQTALT. The disordered stretch occupies residues 235 to 321; that stretch reads DLPLLPGVPM…TKTTAKRSKK (87 aa).

The protein localises to the cell projection. It localises to the cilium. The protein resides in the flagellum. Functionally, required for normal spermatogenesis and male fertility. Plays an important role in sperm flagellum biogenesis. This Homo sapiens (Human) protein is Leucine-rich repeat-containing protein 46 (LRRC46).